A 235-amino-acid polypeptide reads, in one-letter code: Ribonuclease PH (235 aa).

Residues arginine 86 and 124–126 (GTR) each bind phosphate.

It belongs to the RNase PH family. Homohexameric ring arranged as a trimer of dimers.

It carries out the reaction tRNA(n+1) + phosphate = tRNA(n) + a ribonucleoside 5'-diphosphate. In terms of biological role, phosphorolytic 3'-5' exoribonuclease that plays an important role in tRNA 3'-end maturation. Removes nucleotide residues following the 3'-CCA terminus of tRNAs; can also add nucleotides to the ends of RNA molecules by using nucleoside diphosphates as substrates, but this may not be physiologically important. Probably plays a role in initiation of 16S rRNA degradation (leading to ribosome degradation) during starvation. In Francisella philomiragia subsp. philomiragia (strain ATCC 25017 / CCUG 19701 / FSC 153 / O#319-036), this protein is Ribonuclease PH.